A 512-amino-acid chain; its full sequence is MSEIREARLLKANSLVKKGFEPYAETFKITHSTKFLTEKFGYLENGQDFNLDVAIAGRVLAKRVMGKIAFYTIADQEGKIQLYLEKKILDDFEIHAKLLSFEDLKEIVDIGDWIGVYGTIKKTNKGELSIKVSKWEMLSKSLQPLPDKWHGLTDIEKRYRQRYLDLIVNPLSKNVFKTRAKCISLIRRWLDEKNFLEIETPILQSEAGGAEARPFITHHNTLDIPLYLRIATELHLKRMVVGGFEKVYELGRIFRNEGISTKHNPEFTSVEIYQAFSNYIDMMNLTEDLIRDIVLSCCDSLIINYQEKVIDFSKPWKRISMKDVVMEYTGIDFDSFNGDLNKAMKDLEESNIEISPKINTLGRLLNEVFEEKVESQLVEPTFVIDYPIEISPLARPHPENKEMVQRFELFIAGRELANAFSELIDPVDQRKRMQLQQSLRDAGDLEAHCIDEDFLQALEIGMPPTGGLGIGIDRLIMLLTNSPSIRDVITFPLLKPEITSTKSEKSTSNEVK.

Glu408 and Glu415 together coordinate Mg(2+).

The protein belongs to the class-II aminoacyl-tRNA synthetase family. As to quaternary structure, homodimer. Mg(2+) is required as a cofactor.

It localises to the cytoplasm. It catalyses the reaction tRNA(Lys) + L-lysine + ATP = L-lysyl-tRNA(Lys) + AMP + diphosphate. The protein is Lysine--tRNA ligase of Prochlorococcus marinus subsp. pastoris (strain CCMP1986 / NIES-2087 / MED4).